The sequence spans 418 residues: UDP-N-acetylglucosamine 1-carboxyvinyltransferase (418 aa).

22–23 serves as a coordination point for phosphoenolpyruvate; sequence KN. A UDP-N-acetyl-alpha-D-glucosamine-binding site is contributed by R92. The Proton donor role is filled by C116. C116 is modified (2-(S-cysteinyl)pyruvic acid O-phosphothioketal). UDP-N-acetyl-alpha-D-glucosamine-binding positions include 121–125, D305, and L327; that span reads RPIDL.

Belongs to the EPSP synthase family. MurA subfamily.

It localises to the cytoplasm. The catalysed reaction is phosphoenolpyruvate + UDP-N-acetyl-alpha-D-glucosamine = UDP-N-acetyl-3-O-(1-carboxyvinyl)-alpha-D-glucosamine + phosphate. It functions in the pathway cell wall biogenesis; peptidoglycan biosynthesis. In terms of biological role, cell wall formation. Adds enolpyruvyl to UDP-N-acetylglucosamine. The protein is UDP-N-acetylglucosamine 1-carboxyvinyltransferase of Campylobacter jejuni subsp. jejuni serotype O:6 (strain 81116 / NCTC 11828).